We begin with the raw amino-acid sequence, 330 residues long: Endochitinase Ziz m 1.0101 (330 aa).

The N-terminal stretch at 1–24 (MVPQAKLVVASLILTSALIQTSEA) is a signal peptide. The region spanning 26–330 (GGIATYWGQY…LRTKFMYQNA (305 aa)) is the GH18 domain. 3 disulfide bridges follow: Cys-47–Cys-90, Cys-77–Cys-80, and Cys-187–Cys-219. Positions 72–86 (NISGHCSDCTFLGEE) are binds to IgE in 70% of the 10 patients tested allergic to Indian jujube and latex. The tract at residues 292–301 (VWNRYYDLKT) is binds to IgE in 100% of the 10 patients tested allergic to Indian jujube and latex; sufficient for prediction of the presence of allergic reactions in these patients. Binds to IgE in 70% of the 10 patients tested allergic to Indian jujube and latex regions lie at residues 300–311 (KTNYSSSIILEY) and 309–320 (LEYVNSGTKYLP).

It belongs to the glycosyl hydrolase 18 family. Chitinase class II subfamily.

It localises to the secreted. It carries out the reaction Random endo-hydrolysis of N-acetyl-beta-D-glucosaminide (1-&gt;4)-beta-linkages in chitin and chitodextrins.. Defense against chitin containing fungal pathogens. This chain is Endochitinase Ziz m 1.0101, found in Ziziphus mauritiana (Indian jujube).